Reading from the N-terminus, the 511-residue chain is 2-isopropylmalate synthase (511 aa).

One can recognise a Pyruvate carboxyltransferase domain in the interval 5–267; that stretch reads LIVFDTTLRD…DTRIDATQIV (263 aa). The Mn(2+) site is built by Asp14, His202, His204, and Asn238. The segment at 393 to 511 is regulatory domain; that stretch reads RLVASRFHSE…SKLERLNPQL (119 aa).

The protein belongs to the alpha-IPM synthase/homocitrate synthase family. LeuA type 1 subfamily. In terms of assembly, homodimer. Requires Mn(2+) as cofactor.

It is found in the cytoplasm. It carries out the reaction 3-methyl-2-oxobutanoate + acetyl-CoA + H2O = (2S)-2-isopropylmalate + CoA + H(+). It participates in amino-acid biosynthesis; L-leucine biosynthesis; L-leucine from 3-methyl-2-oxobutanoate: step 1/4. Its function is as follows. Catalyzes the condensation of the acetyl group of acetyl-CoA with 3-methyl-2-oxobutanoate (2-ketoisovalerate) to form 3-carboxy-3-hydroxy-4-methylpentanoate (2-isopropylmalate). This Aromatoleum aromaticum (strain DSM 19018 / LMG 30748 / EbN1) (Azoarcus sp. (strain EbN1)) protein is 2-isopropylmalate synthase.